Reading from the N-terminus, the 260-residue chain is tRNA pseudouridine synthase C (260 aa).

Residue Asp-54 is part of the active site.

It belongs to the pseudouridine synthase RluA family.

It catalyses the reaction uridine(65) in tRNA = pseudouridine(65) in tRNA. Functionally, responsible for synthesis of pseudouridine from uracil-65 in transfer RNAs. This chain is tRNA pseudouridine synthase C (truC), found in Escherichia coli O6:H1 (strain CFT073 / ATCC 700928 / UPEC).